A 594-amino-acid polypeptide reads, in one-letter code: Cytoplasmic polyadenylation element-binding protein 1 (594 aa).

A disordered region spans residues 1-33; that stretch reads MQHQVKACGDSKSTTRSLQGNRRSGAASLKKPS. Residues 11–22 are compositionally biased toward polar residues; it reads SKSTTRSLQGNR. RRM domains follow at residues 257–364 and 381–452; these read RKVF…PWRL and RTVF…HAET. The disordered stretch occupies residues 519–560; the sequence is TGDQTRILPRPPHHQSSHYSPRSHQMMNHDSMESSNQSRGNT. Polar residues predominate over residues 535–560; that stretch reads SHYSPRSHQMMNHDSMESSNQSRGNT.

As to quaternary structure, interacts with fbf-1.

Cytoplasmic polyadenylation element binding protein that binds to and regulates the translation of specific mRNAs. Essential for progression through meiosis. Involved in spermatogenesis. The chain is Cytoplasmic polyadenylation element-binding protein 1 (cpb-1) from Caenorhabditis remanei (Caenorhabditis vulgaris).